The sequence spans 1631 residues: Ras GTPase-activating-like protein IQGAP3 (1631 aa).

Residues 34–149 (LCRLEEAKRW…YCIHALSLFL (116 aa)) enclose the Calponin-homology (CH) domain. Position 162 is a phosphotyrosine (Tyr-162). Ser-539 is modified (phosphoserine). IQ domains are found at residues 730–759 (NVGFVIQLQARLRGFLVRQKFAEHSHFLRT), 760–789 (WLPAVIKIQAHWRGYRQRKIYLEWLQYFKA), 790–819 (NLDAIIKIQAWARMWAARRQYLRRLHYFQK), and 820–849 (NVNSIVKIQAFFRARKAQDDYRILVHAPHP). The Ras-GAP domain maps to 1004 to 1253 (YLLLQLFKTA…LKFRKFIHRA (250 aa)). Ser-1424 carries the phosphoserine modification.

The polypeptide is Ras GTPase-activating-like protein IQGAP3 (IQGAP3) (Homo sapiens (Human)).